Consider the following 207-residue polypeptide: SPRY domain-containing protein 4 (207 aa).

Residues 12–207 (YRWGTKRWGV…HSGLEVPKGL (196 aa)) enclose the B30.2/SPRY domain. 2 positions are modified to N6-acetyllysine: K53 and K130. N6-succinyllysine is present on K139.

This Rattus norvegicus (Rat) protein is SPRY domain-containing protein 4 (Spryd4).